Here is a 395-residue protein sequence, read N- to C-terminus: Elongation factor Tu (395 aa).

Residues Lys10–Glu204 enclose the tr-type G domain. The G1 stretch occupies residues Gly19–Thr26. Gly19–Thr26 provides a ligand contact to GTP. Thr26 serves as a coordination point for Mg(2+). Positions Gly60–Asn64 are G2. The interval Asp81–Gly84 is G3. GTP is bound by residues Asp81–His85 and Asn136–Asp139. Residues Asn136–Asp139 form a G4 region. The tract at residues Ser174–Leu176 is G5.

It belongs to the TRAFAC class translation factor GTPase superfamily. Classic translation factor GTPase family. EF-Tu/EF-1A subfamily. As to quaternary structure, monomer.

It is found in the cytoplasm. The enzyme catalyses GTP + H2O = GDP + phosphate + H(+). GTP hydrolase that promotes the GTP-dependent binding of aminoacyl-tRNA to the A-site of ribosomes during protein biosynthesis. The protein is Elongation factor Tu of Lysinibacillus sphaericus (strain C3-41).